Reading from the N-terminus, the 129-residue chain is Large ribosomal subunit protein uL22 (129 aa).

It belongs to the universal ribosomal protein uL22 family. In terms of assembly, part of the 50S ribosomal subunit.

In terms of biological role, this protein binds specifically to 23S rRNA; its binding is stimulated by other ribosomal proteins, e.g. L4, L17, and L20. It is important during the early stages of 50S assembly. It makes multiple contacts with different domains of the 23S rRNA in the assembled 50S subunit and ribosome. Its function is as follows. The globular domain of the protein is located near the polypeptide exit tunnel on the outside of the subunit, while an extended beta-hairpin is found that lines the wall of the exit tunnel in the center of the 70S ribosome. The protein is Large ribosomal subunit protein uL22 of Prochlorococcus marinus (strain MIT 9211).